Reading from the N-terminus, the 686-residue chain is Osmo-dependent choline transporter BetT2 (686 aa).

The Cytoplasmic segment spans residues 1–22 (MATDNPRAVDDQETHPKDRLNR). Residues 23-43 (VVFYVSALIILIFSLTTILFN) form a helical membrane-spanning segment. Residues 44-60 (DFANRALNQVLDWVSST) lie on the Periplasmic side of the membrane. A helical transmembrane segment spans residues 61 to 81 (FSWYYLLAATLYMVFVIFIAC). Residues 82 to 100 (SRYGNIKLGPKHSKPEFSL) lie on the Cytoplasmic side of the membrane. Residues 101-121 (LSWSAMLFSAGIGIDLMFFSV) form a helical membrane-spanning segment. Residues 122–150 (AEPLSHYMHPPVGEGQTYEAARQGMVWTL) lie on the Periplasmic side of the membrane. A helical membrane pass occupies residues 151-171 (FHYGLTGWCMYALIGMALGYF). Over 172–203 (SYRYNLPLTIRSALYPIFGKKINGPIGHSVDT) the chain is Cytoplasmic. The helical transmembrane segment at 204–224 (AAVIGTIFGIATTCGIGVVQL) threads the bilayer. Topologically, residues 225-237 (NYGLHVLFDLPEN) are periplasmic. A helical transmembrane segment spans residues 238–258 (LWVQTALILVAVIITIISVTS). The Cytoplasmic portion of the chain corresponds to 259–265 (GVNKGLR). A helical transmembrane segment spans residues 266-286 (ILSEVNIYVSVGLMLFILFLG). Residues 287–325 (NTEFLLNALVQNVGDYLSRFPSLALESFAFDQPKEWMNS) lie on the Periplasmic side of the membrane. Residues 326 to 346 (WTLFFWAWWVAWSPFVGLFLA) traverse the membrane as a helical segment. At 347–356 (RISRGRTIRE) the chain is on the cytoplasmic side. The chain crosses the membrane as a helical span at residues 357 to 377 (FVSGTLIIPLLFTLTWLSIFG). Topologically, residues 378–412 (NSALHNVIFDGNIALAETVLSNPAHGFYDLLAQYP) are periplasmic. The helical transmembrane segment at 413 to 433 (WFPFIAGVATITGLLFYVTSA) threads the bilayer. At 434-459 (DSGALVLGNFTTQFTNIDHDAPRWLS) the chain is on the cytoplasmic side. Residues 460–480 (VFWAVAIGLLTLAMLMTNGIT) form a helical membrane-spanning segment. Over 481-484 (ALQN) the chain is Periplasmic. Residues 485-505 (ATIIMGLPFSFVMFLVMAGLY) form a helical membrane-spanning segment. Over 506-686 (KSLRLEDYRQ…NRPLFPDPKA (181 aa)) the chain is Cytoplasmic.

The protein belongs to the BCCT transporter (TC 2.A.15) family.

The protein localises to the cell inner membrane. Its function is as follows. Uptake of choline in the presence of high salinity. May primarily serve for osmoprotection. This Acinetobacter baylyi (strain ATCC 33305 / BD413 / ADP1) protein is Osmo-dependent choline transporter BetT2.